A 1397-amino-acid chain; its full sequence is Centlein (1397 aa).

2 disordered regions span residues 1–43 (MAAR…GLAG) and 56–76 (LWRGEEGSGGRRGSGRAGAAV). The residue at position 2 (Ala2) is an N-acetylalanine. A phosphoserine mark is found at Ser5, Ser9, and Ser22. 2 coiled-coil regions span residues 95–126 (EEAKATRSQLLEEELSSLKEELALCQADKEFV) and 405–481 (VVNL…KLMA). Disordered regions lie at residues 422 to 449 (LKEKLEESQGTAPSLSPHDSDSSHSGKA) and 485 to 521 (CDQDFSEKGTEGKHKEPPVKRSRSLSPKSSFMGSEEL). A compositionally biased stretch (basic and acidic residues) spans 485–503 (CDQDFSEKGTEGKHKEPPV). Coiled-coil stretches lie at residues 674–778 (KNEK…KALR), 973–1114 (ISLR…MELL), and 1152–1299 (SESN…LKKM). The residue at position 1219 (Ser1219) is a Phosphoserine. Position 1334 is a phosphothreonine (Thr1334).

In terms of assembly, interacts with CEP250 and CEP68. Interacts with NEK2; the interaction leads to phosphorylation of CNTLN. Phosphorylated directly or indirectly by NEK2.

Its subcellular location is the cytoplasm. It is found in the cytoskeleton. It localises to the microtubule organizing center. The protein localises to the centrosome. The protein resides in the centriole. Its function is as follows. Required for centrosome cohesion and recruitment of CEP68 to centrosomes. In Mus musculus (Mouse), this protein is Centlein.